Consider the following 164-residue polypeptide: ATP synthase subunit b 1 (164 aa).

Residues 4 to 24 (MELAELWVAVAFFVFVGILLY) form a helical membrane-spanning segment.

It belongs to the ATPase B chain family. In terms of assembly, F-type ATPases have 2 components, F(1) - the catalytic core - and F(0) - the membrane proton channel. F(1) has five subunits: alpha(3), beta(3), gamma(1), delta(1), epsilon(1). F(0) has three main subunits: a(1), b(2) and c(10-14). The alpha and beta chains form an alternating ring which encloses part of the gamma chain. F(1) is attached to F(0) by a central stalk formed by the gamma and epsilon chains, while a peripheral stalk is formed by the delta and b chains.

It is found in the cell inner membrane. F(1)F(0) ATP synthase produces ATP from ADP in the presence of a proton or sodium gradient. F-type ATPases consist of two structural domains, F(1) containing the extramembraneous catalytic core and F(0) containing the membrane proton channel, linked together by a central stalk and a peripheral stalk. During catalysis, ATP synthesis in the catalytic domain of F(1) is coupled via a rotary mechanism of the central stalk subunits to proton translocation. Functionally, component of the F(0) channel, it forms part of the peripheral stalk, linking F(1) to F(0). In Azorhizobium caulinodans (strain ATCC 43989 / DSM 5975 / JCM 20966 / LMG 6465 / NBRC 14845 / NCIMB 13405 / ORS 571), this protein is ATP synthase subunit b 1.